The sequence spans 180 residues: Mitochondrial inner membrane protease subunit 2 (180 aa).

A helical transmembrane segment spans residues 19–39; the sequence is LVGITLWVPVLMFVEQHVVSV. Residues Ser46 and Lys92 contribute to the active site.

This sequence belongs to the peptidase S26 family. IMP2 subfamily. Heterodimer of 2 subunits, imp1 and imp2.

The protein localises to the mitochondrion inner membrane. Catalyzes the removal of transit peptides required for the targeting of proteins from the mitochondrial matrix, across the inner membrane, into the inter-membrane space. The protein is Mitochondrial inner membrane protease subunit 2 of Schizosaccharomyces pombe (strain 972 / ATCC 24843) (Fission yeast).